The sequence spans 142 residues: MENLCIKDILQILPHRYPMLLIDKVETVEPGKKIVAYKNVTFNEGFFRGHFPHEPVMPGVLIIEALAQAGAIAVLSLDEFKGKIPYFAGINKAKFRKKVIPGDTLKLEVEMIKLRGSAGIGKGIAKVNEKVVAEAEIMFMIG.

H50 is a catalytic residue.

Belongs to the thioester dehydratase family. FabZ subfamily.

It is found in the cytoplasm. It catalyses the reaction a (3R)-hydroxyacyl-[ACP] = a (2E)-enoyl-[ACP] + H2O. Functionally, involved in unsaturated fatty acids biosynthesis. Catalyzes the dehydration of short chain beta-hydroxyacyl-ACPs and long chain saturated and unsaturated beta-hydroxyacyl-ACPs. This is 3-hydroxyacyl-[acyl-carrier-protein] dehydratase FabZ from Clostridium tetani (strain Massachusetts / E88).